The chain runs to 155 residues: Small ribosomal subunit protein uS7cz/uS7cy (155 aa).

It belongs to the universal ribosomal protein uS7 family. Part of the 30S ribosomal subunit.

The protein resides in the plastid. Its subcellular location is the chloroplast. In terms of biological role, one of the primary rRNA binding proteins, it binds directly to 16S rRNA where it nucleates assembly of the head domain of the 30S subunit. The chain is Small ribosomal subunit protein uS7cz/uS7cy (rps7-A) from Phalaenopsis aphrodite subsp. formosana (Moth orchid).